The sequence spans 386 residues: Erythronate-4-phosphate dehydrogenase (386 aa).

The substrate site is built by Ser59 and Thr81. NAD(+) is bound at residue Asp162. Residue Arg239 is part of the active site. NAD(+) is bound at residue Asp262. Glu267 is an active-site residue. The Proton donor role is filled by His284. An NAD(+)-binding site is contributed by Gly287. Residue Tyr288 participates in substrate binding.

This sequence belongs to the D-isomer specific 2-hydroxyacid dehydrogenase family. PdxB subfamily. Homodimer.

The protein resides in the cytoplasm. The enzyme catalyses 4-phospho-D-erythronate + NAD(+) = (R)-3-hydroxy-2-oxo-4-phosphooxybutanoate + NADH + H(+). Its pathway is cofactor biosynthesis; pyridoxine 5'-phosphate biosynthesis; pyridoxine 5'-phosphate from D-erythrose 4-phosphate: step 2/5. Its function is as follows. Catalyzes the oxidation of erythronate-4-phosphate to 3-hydroxy-2-oxo-4-phosphonooxybutanoate. The chain is Erythronate-4-phosphate dehydrogenase from Psychrobacter cryohalolentis (strain ATCC BAA-1226 / DSM 17306 / VKM B-2378 / K5).